The chain runs to 318 residues: Beta-sarcoglycan (318 aa).

A disordered region spans residues 1 to 32 (MAAAAAAAAEQQSSNGPVKKSMREKAVERRNV). Residues 1-65 (MAAAAAAAAE…GLRGRKGNLA (65 aa)) are Cytoplasmic-facing. Residues 21 to 32 (SMREKAVERRNV) show a composition bias toward basic and acidic residues. The helical; Signal-anchor for type II membrane protein transmembrane segment at 66-86 (ICVIVLLFLLAVINLIITLVI) threads the bilayer. Residues 87 to 318 (WAVIRIGPNG…VSDNPCGNTH (232 aa)) lie on the Extracellular side of the membrane. Residues N158, N211, and N258 are each glycosylated (N-linked (GlcNAc...) asparagine). Disulfide bonds link C288–C314 and C290–C307.

It belongs to the sarcoglycan beta/delta/gamma/zeta family. Cross-link to form 2 major subcomplexes: one consisting of SGCB, SGCD and SGCG and the other consisting of SGCB and SGCD. The association between SGCB and SGCG is particularly strong while SGCA is loosely associated with the other sarcoglycans. In terms of processing, disulfide bonds are present.

Its subcellular location is the cell membrane. It is found in the sarcolemma. The protein localises to the cytoplasm. The protein resides in the cytoskeleton. Functionally, component of the sarcoglycan complex, a subcomplex of the dystrophin-glycoprotein complex which forms a link between the F-actin cytoskeleton and the extracellular matrix. This chain is Beta-sarcoglycan (SGCB), found in Oryctolagus cuniculus (Rabbit).